The following is a 258-amino-acid chain: Cytochrome b-c1 complex subunit Rieske-1, mitochondrial (258 aa).

The transit peptide at 1–46 directs the protein to the mitochondrion; it reads WPVRSAAPSSSAFISANHFSSDDDSSSPRSISPSLASVFLHHTRGF. The Mitochondrial matrix segment spans residues 47 to 95; that stretch reads SSNSVSPAHDMGLVPDLPPTVAAIKNPTSKIVYDEHNHERYPPGDPSKR. A helical transmembrane segment spans residues 96-118; that stretch reads AFAYFVLTGGRFVYASLMRLLIL. At 119 to 258 the chain is on the mitochondrial intermembrane side; the sequence is KFVLSMSASK…FLEENKLLIG (140 aa). A Rieske domain is found at 161–256; sequence RRRTEDDISL…YSFLEENKLL (96 aa). Cys201, His203, Cys220, and His223 together coordinate [2Fe-2S] cluster. A disulfide bond links Cys206 and Cys222.

This sequence belongs to the Rieske iron-sulfur protein family. Component of the ubiquinol-cytochrome c oxidoreductase (cytochrome b-c1 complex, complex III, CIII), a multisubunit enzyme composed of 3 respiratory subunits cytochrome b, cytochrome c1 and Rieske protein, 2 core protein subunits, and several low-molecular weight protein subunits. The complex exists as an obligatory dimer and forms supercomplexes (SCs) in the inner mitochondrial membrane with cytochrome c oxidase (complex IV, CIV). Requires [2Fe-2S] cluster as cofactor.

The protein localises to the mitochondrion inner membrane. The catalysed reaction is a quinol + 2 Fe(III)-[cytochrome c](out) = a quinone + 2 Fe(II)-[cytochrome c](out) + 2 H(+)(out). In terms of biological role, component of the ubiquinol-cytochrome c oxidoreductase, a multisubunit transmembrane complex that is part of the mitochondrial electron transport chain which drives oxidative phosphorylation. The respiratory chain contains 3 multisubunit complexes succinate dehydrogenase (complex II, CII), ubiquinol-cytochrome c oxidoreductase (cytochrome b-c1 complex, complex III, CIII) and cytochrome c oxidase (complex IV, CIV), that cooperate to transfer electrons derived from NADH and succinate to molecular oxygen, creating an electrochemical gradient over the inner membrane that drives transmembrane transport and the ATP synthase. The cytochrome b-c1 complex catalyzes electron transfer from ubiquinol to cytochrome c, linking this redox reaction to translocation of protons across the mitochondrial inner membrane, with protons being carried across the membrane as hydrogens on the quinol. In the process called Q cycle, 2 protons are consumed from the matrix, 4 protons are released into the intermembrane space and 2 electrons are passed to cytochrome c. The Rieske protein is a catalytic core subunit containing a [2Fe-2S] iron-sulfur cluster. It cycles between 2 conformational states during catalysis to transfer electrons from the quinol bound in the Q(0) site in cytochrome b to cytochrome c1. In Nicotiana tabacum (Common tobacco), this protein is Cytochrome b-c1 complex subunit Rieske-1, mitochondrial.